Reading from the N-terminus, the 1111-residue chain is Receptor-type guanylate cyclase gcy-7 (1111 aa).

The N-terminal stretch at 1-24 (MKPFYSMSLVLFLVITLLPKPMFP) is a signal peptide. Topologically, residues 25-488 (QVATGTTGNV…CPKSFVDEYL (464 aa)) are extracellular. Asn80, Asn300, Asn326, Asn353, Asn389, Asn407, Asn430, and Asn441 each carry an N-linked (GlcNAc...) asparagine glycan. Residues 489 to 509 (IWVIVAIVVLFLAITAAACGI) traverse the membrane as a helical segment. Residues 510-1111 (YFSIQARRQE…TLKSDEQLSD (602 aa)) lie on the Cytoplasmic side of the membrane. Residues 536–838 (QINSKQKGKG…NDNLMDHVFN (303 aa)) enclose the Protein kinase domain. Residues 542 to 550 (KGKGEHSVR) and Lys568 contribute to the ATP site. The region spanning 896 to 1026 (TIFFSDVVQF…DAVNTASRME (131 aa)) is the Guanylate cyclase domain.

It belongs to the adenylyl cyclase class-4/guanylyl cyclase family. Expressed asymmetrically in ASE left (ASEL) sensory neuron. Expressed in excretory canal cell.

It localises to the cell membrane. The enzyme catalyses GTP = 3',5'-cyclic GMP + diphosphate. In terms of biological role, guanylate cyclase involved in the production of the second messenger cGMP. Unlike other guanylate cyclases expressed in ASE neurons, may not play a role in chemotaxis responses toward salt ions in ASEL (ASE left) sensory neurons. This chain is Receptor-type guanylate cyclase gcy-7, found in Caenorhabditis elegans.